The sequence spans 145 residues: Natriuretic peptides A (145 aa).

An N-terminal signal peptide occupies residues 1–23; it reads MGTSFVGYLTFVLLLLALTKVRG. The propeptide occupies 24–117; the sequence is GPAYNSPLSS…KLRELLNAPR (94 aa). Cys-125 and Cys-141 are joined by a disulfide.

This sequence belongs to the natriuretic peptide family. Cleaved upon secretion to produce the functional hormone.

The protein resides in the secreted. Its function is as follows. Hormone playing a key role in cardiovascular homeostasis through regulation of natriuresis, diuresis, and vasodilation. Has a cGMP-stimulating activity. This Aquarana catesbeiana (American bullfrog) protein is Natriuretic peptides A.